A 136-amino-acid chain; its full sequence is Peptide methionine sulfoxide reductase MsrB (136 aa).

The 128-residue stretch at 9–136 (DAEWKALLAE…NSASLDFKKK (128 aa)) folds into the MsrB domain. Zn(2+)-binding residues include Cys53, Cys56, Cys102, and Cys105. The active-site Nucleophile is the Cys125.

Belongs to the MsrB Met sulfoxide reductase family. Requires Zn(2+) as cofactor.

The catalysed reaction is L-methionyl-[protein] + [thioredoxin]-disulfide + H2O = L-methionyl-(R)-S-oxide-[protein] + [thioredoxin]-dithiol. The protein is Peptide methionine sulfoxide reductase MsrB of Variovorax paradoxus (strain S110).